The chain runs to 255 residues: 5-oxoprolinase subunit A (255 aa).

This sequence belongs to the LamB/PxpA family. Forms a complex composed of PxpA, PxpB and PxpC.

The enzyme catalyses 5-oxo-L-proline + ATP + 2 H2O = L-glutamate + ADP + phosphate + H(+). In terms of biological role, catalyzes the cleavage of 5-oxoproline to form L-glutamate coupled to the hydrolysis of ATP to ADP and inorganic phosphate. This Pyrococcus abyssi (strain GE5 / Orsay) protein is 5-oxoprolinase subunit A.